We begin with the raw amino-acid sequence, 568 residues long: General O-oligosaccharyltransferase (568 aa).

12 helical membrane-spanning segments follow: residues 17–37 (VAVMRFLLLLLTAVLISLAWL), 46–66 (LTFASEMLSFAAFLSLLALFL), 78–98 (LALPVVFIPMIQWGFGLVVDF), 101–121 (ALLSSAYLLGFWLTMLLGYNL), 132–152 (FTLSSYLLFAVALLTSLIACI), 176–196 (FAQPNNMSTFLILGLLGCLYL), 214–234 (IVFAITLSQSRTAWVFGLFFI), 251–271 (YAVLLWAIGFFAVGLLFPRFT), 349–369 (LLVWNGWLLGGLITICILIWI), 376–396 (AKTTESIIACLMVSAVWIHTL), 397–417 (LEYPLQYAYFLLPVGFLMGLI), and 429–449 (VPVSVIRSIWVIGIMLLALIW).

Belongs to the PglL O-oligosaccharyltransferase family.

It is found in the cell membrane. Catalyzes the O-glycosylation of multiple protein targets. Is responsible for general protein glycosylation within A.baylyi ADP1. Does not act as an O-antigen ligase. The sequence is that of General O-oligosaccharyltransferase from Acinetobacter baylyi (strain ATCC 33305 / BD413 / ADP1).